The sequence spans 501 residues: LIM domain-containing protein HDR3 (501 aa).

Residues 33–67 (GEANRRRPRVTAGEETTLWEEPVRPKKEEPPRHNN) form a disordered region. The span at 53 to 67 (EPVRPKKEEPPRHNN) shows a compositional bias: basic and acidic residues. UIM domains are found at residues 65 to 84 (HNNE…DAKN) and 94 to 113 (ENDE…NPYQ). The region spanning 131–191 (RVCGGCKHEI…KLCYKELHHP (61 aa)) is the LIM zinc-binding domain. The interval 429–448 (YASSSSSSCRPPPSKKGGIS) is disordered.

Interacts (via N-terminus) with GW6A (via C-terminus).

Ubiquitin receptor that functions as a positive regulator of grain size and weight. Functions in the same genetic pathway as GW6A to regulate grain size. Modulates grain size in a similar manner to GW6A, by altering cell proliferation in spikelet hulls. Interacts with and enhances the ubiquitination of GW6A. This stabilizes GW6A, delays protein degradation by the 26S proteasome and enhances GW6A histone acetyltransferase activity. The chain is LIM domain-containing protein HDR3 from Oryza sativa subsp. japonica (Rice).